The chain runs to 459 residues: uncharacterized protein (459 aa).

Residues 7 to 65 (PVNKNEIYTLTFEDLTHEGNGVAKIEGYPLFVPEVLPDEQAKVKVVKVNKNFGFGKLLE) enclose the TRAM domain. [4Fe-4S] cluster-binding residues include Cys78, Cys82, Cys85, and Cys164. S-adenosyl-L-methionine-binding residues include Gln288, Tyr317, Glu338, and Asp386. The Nucleophile role is filled by Cys413.

The protein belongs to the class I-like SAM-binding methyltransferase superfamily. RNA M5U methyltransferase family.

This is an uncharacterized protein from Oceanobacillus iheyensis (strain DSM 14371 / CIP 107618 / JCM 11309 / KCTC 3954 / HTE831).